Consider the following 682-residue polypeptide: Potassium-transporting ATPase ATP-binding subunit (682 aa).

The next 4 membrane-spanning stretches (helical) occupy residues 34 to 54 (PVMFIVWIGSLLTTCISIAMA), 62 to 82 (ALFSAAISGWLWITVLFANFA), 219 to 239 (IALTILLIALTIVFLLATATL), and 254 to 274 (VLVALLVCLIPTTIGGLLSAI). The active-site 4-aspartylphosphate intermediate is the Asp-307. ATP contacts are provided by residues Asp-344, Glu-348, 377–384 (FTAQSRMS), and Lys-395. Mg(2+) is bound by residues Asp-518 and Asp-522. A run of 3 helical transmembrane segments spans residues 588-608 (FAIIPAAFAATYPQLNALNIM), 616-636 (AILSAVIFNALIIVFLIPLAL), and 656-676 (IYGLGGLLVPFIGIKVIDLLL).

The protein belongs to the cation transport ATPase (P-type) (TC 3.A.3) family. Type IA subfamily. In terms of assembly, the system is composed of three essential subunits: KdpA, KdpB and KdpC.

Its subcellular location is the cell inner membrane. It catalyses the reaction K(+)(out) + ATP + H2O = K(+)(in) + ADP + phosphate + H(+). Functionally, part of the high-affinity ATP-driven potassium transport (or Kdp) system, which catalyzes the hydrolysis of ATP coupled with the electrogenic transport of potassium into the cytoplasm. This subunit is responsible for energy coupling to the transport system and for the release of the potassium ions to the cytoplasm. This chain is Potassium-transporting ATPase ATP-binding subunit, found in Escherichia coli (strain K12 / MC4100 / BW2952).